Reading from the N-terminus, the 367-residue chain is Putative S-adenosyl-L-methionine-dependent methyltransferase MT0751 (367 aa).

S-adenosyl-L-methionine is bound by residues Asp137 and 166–167 (DL). Residues 348-358 (TRSDAHQASTT) are compositionally biased toward polar residues. The disordered stretch occupies residues 348–367 (TRSDAHQASTTAPPPPGLTG).

Belongs to the UPF0677 family.

Functionally, exhibits S-adenosyl-L-methionine-dependent methyltransferase activity. This chain is Putative S-adenosyl-L-methionine-dependent methyltransferase MT0751, found in Mycobacterium tuberculosis (strain CDC 1551 / Oshkosh).